Reading from the N-terminus, the 260-residue chain is Proteasome subunit alpha (260 aa).

A disordered region spans residues 231–260 (LLPEDFSPGQTEGGGDPAPESGDSKDAKDN).

Belongs to the peptidase T1A family. In terms of assembly, the 20S proteasome core is composed of 14 alpha and 14 beta subunits that assemble into four stacked heptameric rings, resulting in a barrel-shaped structure. The two inner rings, each composed of seven catalytic beta subunits, are sandwiched by two outer rings, each composed of seven alpha subunits. The catalytic chamber with the active sites is on the inside of the barrel. Has a gated structure, the ends of the cylinder being occluded by the N-termini of the alpha-subunits. Is capped by the proteasome-associated ATPase, ARC.

Its subcellular location is the cytoplasm. Its pathway is protein degradation; proteasomal Pup-dependent pathway. Its activity is regulated as follows. The formation of the proteasomal ATPase ARC-20S proteasome complex, likely via the docking of the C-termini of ARC into the intersubunit pockets in the alpha-rings, may trigger opening of the gate for substrate entry. Interconversion between the open-gate and close-gate conformations leads to a dynamic regulation of the 20S proteasome proteolysis activity. In terms of biological role, component of the proteasome core, a large protease complex with broad specificity involved in protein degradation. The polypeptide is Proteasome subunit alpha (Mycobacteroides abscessus (strain ATCC 19977 / DSM 44196 / CCUG 20993 / CIP 104536 / JCM 13569 / NCTC 13031 / TMC 1543 / L948) (Mycobacterium abscessus)).